A 338-amino-acid chain; its full sequence is Ketol-acid reductoisomerase (NADP(+)) (338 aa).

The region spanning 1–181 is the KARI N-terminal Rossmann domain; it reads MKVYYDKDCN…GGGRSGIIET (181 aa). NADP(+) contacts are provided by residues 24–27, arginine 47, serine 50, serine 52, and 82–85; these read YGSQ and DETQ. The active site involves histidine 107. Glycine 133 is a binding site for NADP(+). The 146-residue stretch at 182–327 folds into the KARI C-terminal knotted domain; the sequence is NFREETETDL…ARLRAMMPWI (146 aa). Mg(2+) is bound by residues aspartate 190, glutamate 194, glutamate 226, and glutamate 230. A substrate-binding site is contributed by serine 251.

Belongs to the ketol-acid reductoisomerase family. Requires Mg(2+) as cofactor.

The enzyme catalyses (2R)-2,3-dihydroxy-3-methylbutanoate + NADP(+) = (2S)-2-acetolactate + NADPH + H(+). The catalysed reaction is (2R,3R)-2,3-dihydroxy-3-methylpentanoate + NADP(+) = (S)-2-ethyl-2-hydroxy-3-oxobutanoate + NADPH + H(+). The protein operates within amino-acid biosynthesis; L-isoleucine biosynthesis; L-isoleucine from 2-oxobutanoate: step 2/4. It functions in the pathway amino-acid biosynthesis; L-valine biosynthesis; L-valine from pyruvate: step 2/4. Involved in the biosynthesis of branched-chain amino acids (BCAA). Catalyzes an alkyl-migration followed by a ketol-acid reduction of (S)-2-acetolactate (S2AL) to yield (R)-2,3-dihydroxy-isovalerate. In the isomerase reaction, S2AL is rearranged via a Mg-dependent methyl migration to produce 3-hydroxy-3-methyl-2-ketobutyrate (HMKB). In the reductase reaction, this 2-ketoacid undergoes a metal-dependent reduction by NADPH to yield (R)-2,3-dihydroxy-isovalerate. This is Ketol-acid reductoisomerase (NADP(+)) from Pelobacter propionicus (strain DSM 2379 / NBRC 103807 / OttBd1).